Consider the following 140-residue polypeptide: MTIQYTFSMIKPDAIKRNKIGQVNTYLENAGLKIVAQKMKFLTKYEAACFYDEHRARPFFNSLVEYITSGAVVLQVLKGEDAITLNRTVMGATNPAEAEAGTIRKDLGESIEANSIHGSDSENSAKREIEFFFNKSEIIE.

The ATP site is built by K11, F59, R87, T93, R104, and N114. Catalysis depends on H117, which acts as the Pros-phosphohistidine intermediate.

It belongs to the NDK family. As to quaternary structure, homotetramer. Mg(2+) serves as cofactor.

Its subcellular location is the cytoplasm. The enzyme catalyses a 2'-deoxyribonucleoside 5'-diphosphate + ATP = a 2'-deoxyribonucleoside 5'-triphosphate + ADP. It catalyses the reaction a ribonucleoside 5'-diphosphate + ATP = a ribonucleoside 5'-triphosphate + ADP. Its function is as follows. Major role in the synthesis of nucleoside triphosphates other than ATP. The ATP gamma phosphate is transferred to the NDP beta phosphate via a ping-pong mechanism, using a phosphorylated active-site intermediate. The polypeptide is Nucleoside diphosphate kinase (Rickettsia conorii (strain ATCC VR-613 / Malish 7)).